Consider the following 662-residue polypeptide: DNA ligase (662 aa).

NAD(+)-binding positions include 31–35 (DYEYD), 80–81 (SL), and glutamate 109. Lysine 111 acts as the N6-AMP-lysine intermediate in catalysis. NAD(+) is bound by residues arginine 132, glutamate 166, lysine 282, and lysine 306. Residues cysteine 400, cysteine 403, cysteine 418, and cysteine 423 each contribute to the Zn(2+) site. One can recognise a BRCT domain in the interval 581 to 662 (KVNNIFEGKT…FEEMLKGENI (82 aa)).

It belongs to the NAD-dependent DNA ligase family. LigA subfamily. Mg(2+) is required as a cofactor. Requires Mn(2+) as cofactor.

The catalysed reaction is NAD(+) + (deoxyribonucleotide)n-3'-hydroxyl + 5'-phospho-(deoxyribonucleotide)m = (deoxyribonucleotide)n+m + AMP + beta-nicotinamide D-nucleotide.. In terms of biological role, DNA ligase that catalyzes the formation of phosphodiester linkages between 5'-phosphoryl and 3'-hydroxyl groups in double-stranded DNA using NAD as a coenzyme and as the energy source for the reaction. It is essential for DNA replication and repair of damaged DNA. This Thermoanaerobacter pseudethanolicus (strain ATCC 33223 / 39E) (Clostridium thermohydrosulfuricum) protein is DNA ligase.